Consider the following 209-residue polypeptide: COP9 signalosome complex subunit 8 (209 aa).

In terms of domain architecture, PCI spans 8-179 (DNAFSFRKLL…GTLDVSLNRF (172 aa)). S175 carries the post-translational modification Phosphoserine.

The protein belongs to the CSN8 family. In terms of assembly, component of the CSN complex, composed of COPS1/GPS1, COPS2, COPS3, COPS4, COPS5, COPS6, COPS7 (COPS7A or COPS7B), COPS8 and COPS9. In the complex, it probably interacts directly with COPS3, COPS4 and COPS7 (COPS7A or COPS7B). As to expression, widely expressed.

It localises to the cytoplasm. It is found in the nucleus. Functionally, component of the COP9 signalosome complex (CSN), a complex involved in various cellular and developmental processes. The CSN complex is an essential regulator of the ubiquitin (Ubl) conjugation pathway by mediating the deneddylation of the cullin subunits of SCF-type E3 ligase complexes, leading to decrease the Ubl ligase activity of SCF-type complexes such as SCF, CSA or DDB2. The complex is also involved in phosphorylation of p53/TP53, c-jun/JUN, IkappaBalpha/NFKBIA, ITPK1 and IRF8/ICSBP, possibly via its association with CK2 and PKD kinases. CSN-dependent phosphorylation of TP53 and JUN promotes and protects degradation by the Ubl system, respectively. The chain is COP9 signalosome complex subunit 8 (Cops8) from Mus musculus (Mouse).